Here is a 219-residue protein sequence, read N- to C-terminus: Casein kinase II subunit beta' (219 aa).

Threonine 2 is modified (phosphothreonine; by autocatalysis).

This sequence belongs to the casein kinase 2 subunit beta family. As to quaternary structure, tetramer of two alpha and two beta' subunits. Phosphorylated by alpha subunit.

Its function is as follows. Participates in Wnt signaling. Plays a complex role in regulating the basal catalytic activity of the alpha subunit. This Drosophila melanogaster (Fruit fly) protein is Casein kinase II subunit beta' (CkIIbeta2).